The chain runs to 333 residues: Complement C1q and tumor necrosis factor-related protein 9B (333 aa).

The first 19 residues, Met-1 to Ser-19, serve as a signal peptide directing secretion. Collagen-like domains lie at Arg-24–Val-82, Gly-95–Met-154, and Gly-155–Gly-191. The tract at residues Arg-24–Glu-189 is disordered. Low complexity predominate over residues Gly-26 to Pro-40. Basic and acidic residues-rich tracts occupy residues Arg-42–Ala-55 and Thr-69–Lys-88. In terms of domain architecture, C1q spans Leu-197–Gln-333.

In terms of assembly, interacts with CTRP9A and ADIPOQ. Forms heterotrimers and heterooligomeric complexes with CTRP9A. As to expression, expressed at low levels. Not expressed in adipose tissues.

Its subcellular location is the secreted. Probable adipokine. Activates AMPK, AKT, and p44/42 MAPK signaling pathways. The chain is Complement C1q and tumor necrosis factor-related protein 9B (C1QTNF9B) from Homo sapiens (Human).